Consider the following 190-residue polypeptide: Protein GrpE (190 aa).

A disordered region spans residues 1 to 41 (MAKEKQEEQQKQTAPENEKAPKKDIKKEASDKKGDQTSKLK).

It belongs to the GrpE family. Homodimer.

The protein localises to the cytoplasm. Participates actively in the response to hyperosmotic and heat shock by preventing the aggregation of stress-denatured proteins, in association with DnaK and GrpE. It is the nucleotide exchange factor for DnaK and may function as a thermosensor. Unfolded proteins bind initially to DnaJ; upon interaction with the DnaJ-bound protein, DnaK hydrolyzes its bound ATP, resulting in the formation of a stable complex. GrpE releases ADP from DnaK; ATP binding to DnaK triggers the release of the substrate protein, thus completing the reaction cycle. Several rounds of ATP-dependent interactions between DnaJ, DnaK and GrpE are required for fully efficient folding. This Limosilactobacillus reuteri (strain DSM 20016) (Lactobacillus reuteri) protein is Protein GrpE.